The sequence spans 740 residues: Phosphoribosylformylglycinamidine synthase subunit PurL (740 aa).

The active site involves His49. The ATP site is built by Tyr52 and Lys91. A Mg(2+)-binding site is contributed by Glu93. Residues 94–97 and Arg116 each bind substrate; that span reads SHNH. The Proton acceptor role is filled by His95. Asp117 contacts Mg(2+). Gln245 lines the substrate pocket. Asp273 is a binding site for Mg(2+). 317-319 provides a ligand contact to substrate; sequence ESQ. Residues Asp501 and Gly538 each coordinate ATP. Residue Asn539 coordinates Mg(2+). Ser541 is a binding site for substrate.

The protein belongs to the FGAMS family. Monomer. Part of the FGAM synthase complex composed of 1 PurL, 1 PurQ and 2 PurS subunits.

It is found in the cytoplasm. It catalyses the reaction N(2)-formyl-N(1)-(5-phospho-beta-D-ribosyl)glycinamide + L-glutamine + ATP + H2O = 2-formamido-N(1)-(5-O-phospho-beta-D-ribosyl)acetamidine + L-glutamate + ADP + phosphate + H(+). Its pathway is purine metabolism; IMP biosynthesis via de novo pathway; 5-amino-1-(5-phospho-D-ribosyl)imidazole from N(2)-formyl-N(1)-(5-phospho-D-ribosyl)glycinamide: step 1/2. In terms of biological role, part of the phosphoribosylformylglycinamidine synthase complex involved in the purines biosynthetic pathway. Catalyzes the ATP-dependent conversion of formylglycinamide ribonucleotide (FGAR) and glutamine to yield formylglycinamidine ribonucleotide (FGAM) and glutamate. The FGAM synthase complex is composed of three subunits. PurQ produces an ammonia molecule by converting glutamine to glutamate. PurL transfers the ammonia molecule to FGAR to form FGAM in an ATP-dependent manner. PurS interacts with PurQ and PurL and is thought to assist in the transfer of the ammonia molecule from PurQ to PurL. The polypeptide is Phosphoribosylformylglycinamidine synthase subunit PurL (Sulfurovum sp. (strain NBC37-1)).